We begin with the raw amino-acid sequence, 98 residues long: N(2)-fixation sustaining protein CowN (98 aa).

Belongs to the CowN family.

Its function is as follows. Is required to sustain N(2)-dependent growth in the presence of low levels of carbon monoxide (CO). Probably acts by protecting the N(2) fixation ability of the nitrogenase complex, which is inactivated in the presence of CO. The sequence is that of N(2)-fixation sustaining protein CowN from Trichlorobacter lovleyi (strain ATCC BAA-1151 / DSM 17278 / SZ) (Geobacter lovleyi).